The primary structure comprises 423 residues: UPF0229 protein VP0986 (423 aa).

A disordered region spans residues 69 to 112 (GGVRERVHPGNDQFITGDKIERPKGGGQGSGSGEGNASPDGEGQ). Over residues 93–102 (GGGQGSGSGE) the composition is skewed to gly residues.

Belongs to the UPF0229 family.

The sequence is that of UPF0229 protein VP0986 from Vibrio parahaemolyticus serotype O3:K6 (strain RIMD 2210633).